The sequence spans 324 residues: Porphobilinogen deaminase (324 aa).

S-(dipyrrolylmethanemethyl)cysteine is present on Cys246. The segment at 261–279 (GQAPEEGGRAAASQAPAAL) is insert.

Belongs to the HMBS family. Monomer. Requires dipyrromethane as cofactor.

The enzyme catalyses 4 porphobilinogen + H2O = hydroxymethylbilane + 4 NH4(+). The protein operates within porphyrin-containing compound metabolism; protoporphyrin-IX biosynthesis; coproporphyrinogen-III from 5-aminolevulinate: step 2/4. Tetrapolymerization of the monopyrrole PBG into the hydroxymethylbilane pre-uroporphyrinogen in several discrete steps. This Paenibacillus macerans (Bacillus macerans) protein is Porphobilinogen deaminase (hemC).